A 643-amino-acid polypeptide reads, in one-letter code: Macrolide export ATP-binding/permease protein MacB (643 aa).

An ABC transporter domain is found at Ile-6–His-244. Gly-42 to Ser-49 provides a ligand contact to ATP. A run of 4 helical transmembrane segments spans residues Val-270–Gly-290, Leu-518–Met-538, Phe-569–Leu-589, and Leu-606–Leu-626.

It belongs to the ABC transporter superfamily. Macrolide exporter (TC 3.A.1.122) family. In terms of assembly, homodimer.

It is found in the cell inner membrane. In terms of biological role, non-canonical ABC transporter that contains transmembrane domains (TMD), which form a pore in the inner membrane, and an ATP-binding domain (NBD), which is responsible for energy generation. Confers resistance against macrolides. This Wolinella succinogenes (strain ATCC 29543 / DSM 1740 / CCUG 13145 / JCM 31913 / LMG 7466 / NCTC 11488 / FDC 602W) (Vibrio succinogenes) protein is Macrolide export ATP-binding/permease protein MacB.